A 255-amino-acid chain; its full sequence is Ribosomal RNA small subunit methyltransferase J (255 aa).

Residues 107-108 (RD), 123-124 (ER), and Asp-178 each bind S-adenosyl-L-methionine. The interval 228-247 (ARAEPLSGRKPSHQIPGKTT) is disordered.

This sequence belongs to the methyltransferase superfamily. RsmJ family.

It localises to the cytoplasm. It catalyses the reaction guanosine(1516) in 16S rRNA + S-adenosyl-L-methionine = N(2)-methylguanosine(1516) in 16S rRNA + S-adenosyl-L-homocysteine + H(+). Specifically methylates the guanosine in position 1516 of 16S rRNA. The sequence is that of Ribosomal RNA small subunit methyltransferase J from Thioalkalivibrio sulfidiphilus (strain HL-EbGR7).